We begin with the raw amino-acid sequence, 243 residues long: Probable transcriptional regulatory protein BH0025 (243 aa).

The protein belongs to the TACO1 family.

The protein localises to the cytoplasm. The protein is Probable transcriptional regulatory protein BH0025 of Borrelia hermsii (strain HS1 / DAH).